A 282-amino-acid polypeptide reads, in one-letter code: Probable endonuclease 4 (282 aa).

Zn(2+)-binding residues include H69, H109, E145, D179, H182, H216, D229, H231, and E261.

It belongs to the AP endonuclease 2 family. The cofactor is Zn(2+).

The catalysed reaction is Endonucleolytic cleavage to 5'-phosphooligonucleotide end-products.. Its function is as follows. Endonuclease IV plays a role in DNA repair. It cleaves phosphodiester bonds at apurinic or apyrimidinic (AP) sites, generating a 3'-hydroxyl group and a 5'-terminal sugar phosphate. In Campylobacter fetus subsp. fetus (strain 82-40), this protein is Probable endonuclease 4.